A 635-amino-acid chain; its full sequence is Protein phosphatase PP2A regulatory subunit A (635 aa).

Over residues 1–27 the composition is skewed to low complexity; the sequence is MSGARSTTAGAVPSAATTSTTSTTSNS. The tract at residues 1-33 is disordered; it reads MSGARSTTAGAVPSAATTSTTSTTSNSKDSDSN. HEAT repeat units lie at residues 34–72, 73–111, 112–150, 151–189, 190–228, 229–273, 274–316, 317–356, 357–395, 396–434, 435–473, 474–512, 513–553, 554–598, and 599–632; these read ESLY…GPER, TRNE…GGPQ, YATI…SQEQ, LFSD…KDDS, LRKN…TQNL, GLST…NAKG, DESH…SNQA, YIDE…DPSI, ILNK…NKDQ, VINN…GIEL, LSDS…GMQF, FDQQ…GSDW, CRDE…SLDV, VTEQ…YDAL, and IKNT…CQEL.

This sequence belongs to the phosphatase 2A regulatory subunit A family. PP2A exists in several trimeric forms, all of which consist of a core composed of a catalytic subunit associated with a 65 kDa regulatory subunit (PR65) (subunit A). The core complex associates with a third, variable subunit (subunit B), which confers distinct properties to the holoenzyme.

In terms of biological role, phosphatase 2A affects a variety of biological processes in the cell such as transcription, cell cycle progression and cellular morphogenesis, and provides an initial identification of critical substrates for this phosphatase. The regulatory subunit may direct the catalytic subunit to distinct, albeit overlapping, subsets of substrates. The protein is Protein phosphatase PP2A regulatory subunit A (TPD3) of Saccharomyces cerevisiae (strain ATCC 204508 / S288c) (Baker's yeast).